The following is a 125-amino-acid chain: Oxytocin-neurophysin 1 (125 aa).

The first 19 residues, 1-19, serve as a signal peptide directing secretion; that stretch reads MAGSSLACCLLGLLALTSA. Cys-20 and Cys-25 are disulfide-bonded. A Glycine amide modification is found at Gly-28. Cystine bridges form between Cys-41–Cys-85, Cys-44–Cys-58, Cys-52–Cys-75, Cys-59–Cys-65, Cys-92–Cys-104, Cys-98–Cys-116, and Cys-105–Cys-110.

Belongs to the vasopressin/oxytocin family. In terms of assembly, interacts with oxytocin receptor (Ki=1.5 nM). Interacts with vasopressin V1aR/AVPR1A (Ki=37 nM), V1bR/AVPR1B (Ki=222 nM), and V2R/AVPR2 receptors (Ki=823 nM).

The protein resides in the secreted. Its function is as follows. Neurophysin 1 specifically binds oxytocin. Functionally, oxytocin causes contraction of the smooth muscle of the uterus and of the mammary gland. Acts by binding to oxytocin receptor (OXTR). The sequence is that of Oxytocin-neurophysin 1 (OXT) from Bos taurus (Bovine).